The following is a 353-amino-acid chain: Holliday junction branch migration complex subunit RuvB (353 aa).

The segment at 1–183 (MSGEGLVSAA…FGFTAHMDFY (183 aa)) is large ATPase domain (RuvB-L). Residues Leu22, Arg23, Gly64, Lys67, Thr68, Ser69, 130–132 (EDF), Arg173, Tyr183, and Arg220 contribute to the ATP site. Mg(2+) is bound at residue Thr68. A small ATPAse domain (RuvB-S) region spans residues 184-254 (DAAELALVLT…VARAALRIYD (71 aa)). The interval 257–353 (ALGLDRLDRA…ALFGEDLPAS (97 aa)) is head domain (RuvB-H). Residues Arg312 and Arg317 each contribute to the DNA site.

It belongs to the RuvB family. Homohexamer. Forms an RuvA(8)-RuvB(12)-Holliday junction (HJ) complex. HJ DNA is sandwiched between 2 RuvA tetramers; dsDNA enters through RuvA and exits via RuvB. An RuvB hexamer assembles on each DNA strand where it exits the tetramer. Each RuvB hexamer is contacted by two RuvA subunits (via domain III) on 2 adjacent RuvB subunits; this complex drives branch migration. In the full resolvosome a probable DNA-RuvA(4)-RuvB(12)-RuvC(2) complex forms which resolves the HJ.

It is found in the cytoplasm. It catalyses the reaction ATP + H2O = ADP + phosphate + H(+). In terms of biological role, the RuvA-RuvB-RuvC complex processes Holliday junction (HJ) DNA during genetic recombination and DNA repair, while the RuvA-RuvB complex plays an important role in the rescue of blocked DNA replication forks via replication fork reversal (RFR). RuvA specifically binds to HJ cruciform DNA, conferring on it an open structure. The RuvB hexamer acts as an ATP-dependent pump, pulling dsDNA into and through the RuvAB complex. RuvB forms 2 homohexamers on either side of HJ DNA bound by 1 or 2 RuvA tetramers; 4 subunits per hexamer contact DNA at a time. Coordinated motions by a converter formed by DNA-disengaged RuvB subunits stimulates ATP hydrolysis and nucleotide exchange. Immobilization of the converter enables RuvB to convert the ATP-contained energy into a lever motion, pulling 2 nucleotides of DNA out of the RuvA tetramer per ATP hydrolyzed, thus driving DNA branch migration. The RuvB motors rotate together with the DNA substrate, which together with the progressing nucleotide cycle form the mechanistic basis for DNA recombination by continuous HJ branch migration. Branch migration allows RuvC to scan DNA until it finds its consensus sequence, where it cleaves and resolves cruciform DNA. The polypeptide is Holliday junction branch migration complex subunit RuvB (Parafrankia sp. (strain EAN1pec)).